Here is a 131-residue protein sequence, read N- to C-terminus: MATFQVAVADPESGRTYQFEVDGQDANRFIGREIGAAVDGGAVGLDGYTVEITGGSDDAGRPMREDVDGSDLMEVLLEGGAGFNPDEDGERKRVTVRGKEVSEAVAQLNVAIDEHGEEPVAELLGADGDDE.

This sequence belongs to the eukaryotic ribosomal protein eS6 family.

The chain is Small ribosomal subunit protein eS6 from Halobacterium salinarum (strain ATCC 29341 / DSM 671 / R1).